The following is a 294-amino-acid chain: Bifunctional protein FolD (294 aa).

NADP(+) is bound by residues 166–168, serine 191, and isoleucine 232; that span reads GRS.

It belongs to the tetrahydrofolate dehydrogenase/cyclohydrolase family. As to quaternary structure, homodimer.

The catalysed reaction is (6R)-5,10-methylene-5,6,7,8-tetrahydrofolate + NADP(+) = (6R)-5,10-methenyltetrahydrofolate + NADPH. It catalyses the reaction (6R)-5,10-methenyltetrahydrofolate + H2O = (6R)-10-formyltetrahydrofolate + H(+). Its pathway is one-carbon metabolism; tetrahydrofolate interconversion. Functionally, catalyzes the oxidation of 5,10-methylenetetrahydrofolate to 5,10-methenyltetrahydrofolate and then the hydrolysis of 5,10-methenyltetrahydrofolate to 10-formyltetrahydrofolate. The sequence is that of Bifunctional protein FolD from Afipia carboxidovorans (strain ATCC 49405 / DSM 1227 / KCTC 32145 / OM5) (Oligotropha carboxidovorans).